A 197-amino-acid chain; its full sequence is Xanthine phosphoribosyltransferase (197 aa).

Xanthine is bound by residues L20 and N27. 128 to 132 (ANGQA) provides a ligand contact to 5-phospho-alpha-D-ribose 1-diphosphate. K156 contacts xanthine.

The protein belongs to the purine/pyrimidine phosphoribosyltransferase family. Xpt subfamily. In terms of assembly, homodimer.

It localises to the cytoplasm. It catalyses the reaction XMP + diphosphate = xanthine + 5-phospho-alpha-D-ribose 1-diphosphate. It functions in the pathway purine metabolism; XMP biosynthesis via salvage pathway; XMP from xanthine: step 1/1. Converts the preformed base xanthine, a product of nucleic acid breakdown, to xanthosine 5'-monophosphate (XMP), so it can be reused for RNA or DNA synthesis. The chain is Xanthine phosphoribosyltransferase from Bacillus anthracis (strain A0248).